We begin with the raw amino-acid sequence, 4834 residues long: MPSESFCLAAQARLDSKWLKTDIQLAFTRDGLCGLWNEMVKDGEIVYTGTESTQNGELPPRKDDSVEPSGTKKEDLNDKEKKDEEETPAPIYRAKSILDSWVWGKQPDVNELKECLSVLVKEQQALAVQSATTTLSALRLKQRLVILERYFIALNRTVFQENVKVKWKSSGISLPPVDKKSSRPAGKGVEGLARVGSRAALSFAFAFLRRAWRSGEDADLCSELLQESLDALRALPEASLFDESTVSSVWLEVVERATRFLRSVVTGDVHGTPATKGPGSIPLQDQHLALAILLELAVQRGTLSQMLSAILLLLQLWDSGAQETDNERSAQGTSAPLLPLLQRFQSIICRKDAPHSEGDMHLLSGPLSPNESFLRYLTLPQDNELAIDLRQTAVVVMAHLDRLATPCMPPLCSSPTSHKGSLQEVIGWGLIGWKYYANVIGPIQCEGLANLGVTQIACAEKRFLILSRNGRVYTQAYNSDTLAPQLVQGLASRNIVKIAAHSDGHHYLALAATGEVYSWGCGDGGRLGHGDTVPLEEPKVISAFSGKQAGKHVVHIACGSTYSAAITAEGELYTWGRGNYGRLGHGSSEDEAIPMLVAGLKGLKVIDVACGSGDAQTLAVTENGQVWSWGDGDYGKLGRGGSDGCKTPKLIEKLQDLDVVKVRCGSQFSIALTKDGQVYSWGKGDNQRLGHGTEEHVRYPKLLEGLQGKKVIDVAAGSTHCLALTEDSEVHSWGSNDQCQHFDTLRVTKPEPAALPGLDTKHIVGIACGPAQSFAWSSCSEWSIGLRVPFVVDICSMTFEQLDLLLRQVSEGMDGSADWPPPQEKECVAVATLNLLRLQLHAAISHQVDPEFLGLGLGSILLNSLKQTVVTLASSAGVLSTVQSAAQAVLQSGWSVLLPTAEERARALSALLPCAVSGNEVNISPGRRFMIDLLVGSLMADGGLESALHAAITAEIQDIEAKKEAQKEKEIDEQEANASTFHRSRTPLDKDLINTGICESSGKQCLPLVQLIQQLLRNIASQTVARLKDVARRISSCLDFEQHSRERSASLDLLLRFQRLLISKLYPGESIGQTSDISSPELMGVGSLLKKYTALLCTHIGDILPVAASIASTSWRHFAEVAYIVEGDFTGVLLPELVVSIVLLLSKNAGLMQEAGAVPLLGGLLEHLDRFNHLAPGKERDDHEELAWPGIMESFFTGQNCRNNEEVTLIRKADLENHNKDGGFWTVIDGKVYDIKDFQTQSLTGNSILAQFAGEDPVVALEAALQFEDTRESMHAFCVGQYLEPDQEIVTIPDLGSLSSPLIDTERNLGLLLGLHASYLAMSTPLSPVEIECAKWLQSSIFSGGLQTSQIHYSYNEEKDEDHCSSPGGTPASKSRLCSHRRALGDHSQAFLQAIADNNIQDHNVKDFLCQIERYCRQCHLTTPIMFPPEHPVEEVGRLLLCCLLKHEDLGHVALSLVHAGALGIEQVKHRTLPKSVVDVCRVVYQAKCSLIKTHQEQGRSYKEVCAPVIERLRFLFNELRPAVCNDLSIMSKFKLLSSLPRWRRIAQKIIRERRKKRVPKKPESTDDEEKIGNEESDLEEACILPHSPINVDKRPIAIKSPKDKWQPLLSTVTGVHKYKWLKQNVQGLYPQSPLLSTIAEFALKEEPVDVEKMRKCLLKQLERAEVRLEGIDTILKLASKNFLLPSVQYAMFCGWQRLIPEGIDIGEPLTDCLKDVDLIPPFNRMLLEVTFGKLYAWAVQNIRNVLMDASAKFKELGIQPVPLQTITNENPSGPSLGTIPQARFLLVMLSMLTLQHGANNLDLLLNSGMLALTQTALRLIGPSCDNVEEDMNASAQGASATVLEETRKETAPVQLPVSGPELAAMMKIGTRVMRGVDWKWGDQDGPPPGLGRVIGELGEDGWIRVQWDTGSTNSYRMGKEGKYDLKLAELPAAAQPSAEDSDTEDDSEAEQTERNIHPTAMMFTSTINLLQTLCLSAGVHAEIMQSEATKTLCGLLRMLVESGTTDKTSSPNRLVYREQHRSWCTLGFVRSIALTPQVCGALSSPQWITLLMKVVEGHAPFTATSLQRQILAVHLLQAVLPSWDKTERARDMKCLVEKLFDFLGSLLTTCSSDVPLLRESTLRRRRVRPQASLTATHSSTLAEEVVALLRTLHSLTQWNGLINKYINSQLRSITHSFVGRPSEGAQLEDYFPDSENPEVGGLMAVLAVIGGIDGRLRLGGQVMHDEFGEGTVTRITPKGKITVQFSDMRTCRVCPLNQLKPLPAVAFNVNNLPFTEPMLSVWAQLVNLAGSKLEKHKIKKSTKQAFAGQVDLDLLRCQQLKLYILKAGRALLSHQDKLRQILSQPAVQETGTVHTDDGAVVSPDLGDMSPEGPQPPMILLQQLLASATQPSPVKAIFDKQELEAAALAVCQCLAVESTHPSSPGFEDCSSSEATTPVAVQHIRPARVKRRKQSPVPALPIVVQLMEMGFSRRNIEFALKSLTGASGNASSLPGVEALVGWLLDHSDIQVTELSDADTVSDEYSDEEVVEDVDDAAYSMSTGAVVTESQTYKKRADFLSNDDYAVYVRENIQVGMMVRCCRAYEEVCEGDVGKVIKLDRDGLHDLNVQCDWQQKGGTYWVRYIHVELIGYPPPSSSSHIKIGDKVRVKASVTTPKYKWGSVTHQSVGVVKAFSANGKDIIVDFPQQSHWTGLLSEMELVPSIHPGVTCDGCQMFPINGSRFKCRNCDDFDFCETCFKTKKHNTRHTFGRINEPGQSAVFCGRSGKQLKRCHSSQPGMLLDSWSRMVKSLNVSSSVNQASRLIDGSEPCWQSSGSQGKHWIRLEIFPDVLVHRLKMIVDPADSSYMPSLVVVSGGNSLNNLIELKTININPSDTTVPLLNDCTEYHRYIEIAIKQCRSSGIDCKIHGLILLGRIRAEEEDLAAVPFLASDNEEEEDEKGNSGSLIRKKAAGLESAATIRTKVFVWGLNDKDQLGGLKGSKIKVPSFSETLSALNVVQVAGGSKSLFAVTVEGKVYACGEATNGRLGLGISSGTVPIPRQITALSSYVVKKVAVHSGGRHATALTVDGKVFSWGEGDDGKLGHFSRMNCDKPRLIEALKTKRIRDIACGSSHSAALTSSGELYTWGLGEYGRLGHGDNTTQLKPKMVKVLLGHRVIQVACGSRDAQTLALTDEGLVFSWGDGDFGKLGRGGSEGCNIPQNIERLNGQGVCQIECGAQFSLALTKSGVVWTWGKGDYFRLGHGSDVHVRKPQVVEGLRGKKIVHVAVGALHCLAVTDSGQVYAWGDNDHGQQGNGTTTVNRKPTLVQGLEGQKITRVACGSSHSVAWTTVDVATPSVHEPVLFQTARDPLGASYLGVPSDADSSAASNKISGASNSKPNRPSLAKILLSLDGNLAKQQALSHILTALQIMYARDAVVGALMPAAMIAPVECPSFSSAAPSDASAMASPMNGEECMLAVDIEDRLSPNPWQEKREIVSSEDAVTPSAVTPSAPSASARPFIPVTDDLGAASIIAETMTKTKEDVESQNKAAGPEPQALDEFTSLLIADDTRVVVDLLKLSVCSRAGDRGRDVLSAVLSGMGTAYPQVADMLLELCVTELEDVATDSQSGRLSSQPVVVESSHPYTDDTSTSGTVKIPGAEGLRVEFDRQCSTERRHDPLTVMDGVNRIVSVRSGREWSDWSSELRIPGDELKWKFISDGSVNGWGWRFTVYPIMPAAGPKELLSDRCVLSCPSMDLVTCLLDFRLNLASNRSIVPRLAASLAACAQLSALAASHRMWALQRLRKLLTTEFGQSININRLLGENDGETRALSFTGSALAALVKGLPEALQRQFEYEDPIVRGGKQLLHSPFFKVLVALACDLELDTLPCCAETHKWAWFRRYCMASRVAVALDKRTPLPRLFLDEVAKKIRELMADSENMDVLHESHDIFKREQDEQLVQWMNRRPDDWTLSAGGSGTIYGWGHNHRGQLGGIEGAKVKVPTPCEALATLRPVQLIGGEQTLFAVTADGKLYATGYGAGGRLGIGGTESVSTPTLLESIQHVFIKKVAVNSGGKHCLALSSEGEVYSWGEAEDGKLGHGNRSPCDRPRVIESLRGIEVVDVAAGGAHSACVTAAGDLYTWGKGRYGRLGHSDSEDQLKPKLVEALQGHRVVDIACGSGDAQTLCLTDDDTVWSWGDGDYGKLGRGGSDGCKVPMKIDSLTGLGVVKVECGSQFSVALTKSGAVYTWGKGDYHRLGHGSDDHVRRPRQVQGLQGKKVIAIATGSLHCVCCTEDGEVYTWGDNDEGQLGDGTTNAIQRPRLVAALQGKKVNRVACGSAHTLAWSTSKPASAGKLPAQVPMEYNHLQEIPIIALRNRLLLLHHLSELFCPCIPMFDLEGSLDETGLGPSVGFDTLRGILISQGKEAAFRKVVQATMVRDRQHGPVVELNRIQVKRSRSKGGLAGPDGTKSVFGQMCAKMSSFGPDSLLLPHRVWKVKFVGESVDDCGGGYSESIAEICEELQNGLTPLLIVTPNGRDESGANRDCYLLSPAARAPVHSSMFRFLGVLLGIAIRTGSPLSLNLAEPVWKQLAGMSLTIADLSEVDKDFIPGLMYIRDNEATSEEFEAMSLPFTVPSASGQDIQLSSKHTHITLDNRAEYVRLAINYRLHEFDEQVAAVREGMARVVPVPLLSLFTGYELETMVCGSPDIPLHLLKSVATYKGIEPSASLIQWFWEVMESFSNTERSLFLRFVWGRTRLPRTIADFRGRDFVIQVLDKYNPPDHFLPESYTCFFLLKLPRYSCKQVLEEKLKYAIHFCKSIDTDDYARIALTGEPAADDSSDDSDNEDVDSFASDSTQDYLTGH.

The disordered stretch occupies residues 50–88; the sequence is TESTQNGELPPRKDDSVEPSGTKKEDLNDKEKKDEEETP. The span at 59–84 shows a compositional bias: basic and acidic residues; it reads PPRKDDSVEPSGTKKEDLNDKEKKDE. Threonine 272 carries the post-translational modification Phosphothreonine. The RCC1 1-1 repeat unit spans residues 415-461; sequence PTSHKGSLQEVIGWGLIGWKYYANVIGPIQCEGLANLGVTQIACAEK. The RCC1 1-2 repeat unit spans residues 462–512; the sequence is RFLILSRNGRVYTQAYNSDTLAPQLVQGLASRNIVKIAAHSDGHHYLALAA. Residues 513–568 form an RCC1 1-3 repeat; it reads TGEVYSWGCGDGGRLGHGDTVPLEEPKVISAFSGKQAGKHVVHIACGSTYSAAITA. The RCC1 1-4 repeat unit spans residues 569–620; the sequence is EGELYTWGRGNYGRLGHGSSEDEAIPMLVAGLKGLKVIDVACGSGDAQTLAV. One copy of the RCC1 1-5 repeat lies at 623 to 674; it reads NGQVWSWGDGDYGKLGRGGSDGCKTPKLIEKLQDLDVVKVRCGSQFSIALTK. The residue at position 647 (threonine 647) is a Phosphothreonine. The stretch at 675 to 726 is one RCC1 1-6 repeat; it reads DGQVYSWGKGDNQRLGHGTEEHVRYPKLLEGLQGKKVIDVAAGSTHCLALTE. The RCC1 1-7 repeat unit spans residues 728-778; sequence SEVHSWGSNDQCQHFDTLRVTKPEPAALPGLDTKHIVGIACGPAQSFAWSS. Residues 948 to 980 are a coiled coil; the sequence is LHAAITAEIQDIEAKKEAQKEKEIDEQEANAST. The Cytochrome b5 heme-binding domain occupies 1207–1283; sequence VTLIRKADLE…MHAFCVGQYL (77 aa). A disordered region spans residues 1555–1575; it reads RKKRVPKKPESTDDEEKIGNE. Residues 1566–1575 show a composition bias toward acidic residues; it reads TDDEEKIGNE. Phosphoserine is present on serine 1577. Positions 1859–1932 constitute an MIB/HERC2 domain; that stretch reads SGPELAAMMK…KYDLKLAELP (74 aa). The interval 1933–1958 is disordered; that stretch reads AAAQPSAEDSDTEDDSEAEQTERNIH. Residues 1940 to 1951 are compositionally biased toward acidic residues; the sequence is EDSDTEDDSEAE. Serine 1942 is subject to Phosphoserine. Threonine 1944 carries the post-translational modification Phosphothreonine. Serine 2454 is modified (phosphoserine). In terms of domain architecture, CPH spans 2554 to 2630; it reads RADFLSNDDY…RYIHVELIGY (77 aa). Residues 2703–2755 form a ZZ-type zinc finger; sequence HPGVTCDGCQMFPINGSRFKCRNCDDFDFCETCFKTKKHNTRHTFGRINEPGQ. Zn(2+)-binding residues include cysteine 2708, cysteine 2711, cysteine 2723, cysteine 2726, cysteine 2732, cysteine 2735, histidine 2741, and histidine 2745. Positions 2759-2936 constitute a DOC domain; that stretch reads FCGRSGKQLK…ASDNEEEEDE (178 aa). At serine 2928 the chain carries Phosphoserine. Residues 2958 to 3009 form an RCC1 2-1 repeat; it reads RTKVFVWGLNDKDQLGGLKGSKIKVPSFSETLSALNVVQVAGGSKSLFAVTV. An RCC1 2-2 repeat occupies 3010 to 3064; it reads EGKVYACGEATNGRLGLGISSGTVPIPRQITALSSYVVKKVAVHSGGRHATALTV. Residues 3065 to 3116 form an RCC1 2-3 repeat; that stretch reads DGKVFSWGEGDDGKLGHFSRMNCDKPRLIEALKTKRIRDIACGSSHSAALTS. The RCC1 2-4 repeat unit spans residues 3118-3168; the sequence is GELYTWGLGEYGRLGHGDNTTQLKPKMVKVLLGHRVIQVACGSRDAQTLAL. The RCC1 2-5 repeat unit spans residues 3171-3222; the sequence is EGLVFSWGDGDFGKLGRGGSEGCNIPQNIERLNGQGVCQIECGAQFSLALTK. The RCC1 2-6 repeat unit spans residues 3224-3274; sequence GVVWTWGKGDYFRLGHGSDVHVRKPQVVEGLRGKKIVHVAVGALHCLAVTD. The RCC1 2-7 repeat unit spans residues 3275 to 3326; sequence SGQVYAWGDNDHGQQGNGTTTVNRKPTLVQGLEGQKITRVACGSSHSVAWTT. 2 stretches are compositionally biased toward polar residues: residues 3602 to 3611 and 3618 to 3629; these read SQSGRLSSQP and HPYTDDTSTSGT. The tract at residues 3602-3629 is disordered; sequence SQSGRLSSQPVVVESSHPYTDDTSTSGT. One copy of the RCC1 3-1 repeat lies at 3951 to 4002; it reads SGTIYGWGHNHRGQLGGIEGAKVKVPTPCEALATLRPVQLIGGEQTLFAVTA. An RCC1 3-2 repeat occupies 4004–4056; the sequence is GKLYATGYGAGGRLGIGGTESVSTPTLLESIQHVFIKKVAVNSGGKHCLALSS. The stretch at 4058–4108 is one RCC1 3-3 repeat; that stretch reads GEVYSWGEAEDGKLGHGNRSPCDRPRVIESLRGIEVVDVAAGGAHSACVTA. An RCC1 3-4 repeat occupies 4110 to 4162; sequence GDLYTWGKGRYGRLGHSDSEDQLKPKLVEALQGHRVVDIACGSGDAQTLCLTD. The stretch at 4164–4214 is one RCC1 3-5 repeat; that stretch reads DTVWSWGDGDYGKLGRGGSDGCKVPMKIDSLTGLGVVKVECGSQFSVALTK. The RCC1 3-6 repeat unit spans residues 4216–4266; it reads GAVYTWGKGDYHRLGHGSDDHVRRPRQVQGLQGKKVIAIATGSLHCVCCTE. Residues 4268-4318 form an RCC1 3-7 repeat; it reads GEVYTWGDNDEGQLGDGTTNAIQRPRLVAALQGKKVNRVACGSAHTLAWST. Positions 4457 to 4794 constitute an HECT domain; sequence DSLLLPHRVW…IHFCKSIDTD (338 aa). Cysteine 4762 functions as the Glycyl thioester intermediate in the catalytic mechanism. Residues 4804 to 4834 are disordered; it reads EPAADDSSDDSDNEDVDSFASDSTQDYLTGH. The segment covering 4806-4820 has biased composition (acidic residues); sequence AADDSSDDSDNEDVD. Phosphoserine occurs at positions 4810, 4811, and 4814. Residues 4823–4834 are compositionally biased toward polar residues; sequence ASDSTQDYLTGH. A Phosphothreonine modification is found at threonine 4827.

Interacts (when phosphorylated at Thr-4827 and sumoylated) with RNF8 (via FHA domain); this interaction increases after ionizing radiation (IR) treatment. Interacts with XPA. Interacts with NEURL4. Via its interaction with NEURL4, may indirectly interact with CCP110 and CEP97. In terms of processing, phosphorylation at Thr-4827 is required for interaction with RNF8. Post-translationally, sumoylated with SUMO1 by PIAS4 in response to double-strand breaks (DSBs), promoting the interaction with RNF8.

It is found in the cytoplasm. It localises to the cytoskeleton. Its subcellular location is the microtubule organizing center. The protein resides in the centrosome. The protein localises to the centriole. It is found in the nucleus. The enzyme catalyses S-ubiquitinyl-[E2 ubiquitin-conjugating enzyme]-L-cysteine + [acceptor protein]-L-lysine = [E2 ubiquitin-conjugating enzyme]-L-cysteine + N(6)-ubiquitinyl-[acceptor protein]-L-lysine.. It participates in protein modification; protein ubiquitination. Its function is as follows. E3 ubiquitin-protein ligase that regulates ubiquitin-dependent retention of repair proteins on damaged chromosomes. Recruited to sites of DNA damage in response to ionizing radiation (IR) and facilitates the assembly of UBE2N and RNF8 promoting DNA damage-induced formation of 'Lys-63'-linked ubiquitin chains. Acts as a mediator of binding specificity between UBE2N and RNF8. Involved in the maintenance of RNF168 levels. E3 ubiquitin-protein ligase that promotes the ubiquitination and proteasomal degradation of XPA which influences the circadian oscillation of DNA excision repair activity. By controlling the steady-state expression of the IGF1R receptor, indirectly regulates the insulin-like growth factor receptor signaling pathway. Also modulates iron metabolism by regulating the basal turnover of FBXL5. This is E3 ubiquitin-protein ligase HERC2 from Homo sapiens (Human).